The primary structure comprises 113 residues: Replication initiation control protein YabA (113 aa).

Histidine 86, cysteine 88, cysteine 102, and cysteine 105 together coordinate Zn(2+).

The protein belongs to the YabA family. In terms of assembly, homotetramer. Interacts with both DnaA and DnaN, acting as a bridge between these two proteins. Zn(2+) is required as a cofactor.

It localises to the cytoplasm. The protein resides in the nucleoid. Involved in control of chromosome replication initiation. Inhibits the cooperative binding of DnaA to the oriC region, thus negatively regulating initiation of chromosome replication. Inhibits the ability of DnaA-ATP to form a helix on DNA; does not disassemble preformed DnaA-DNA helices. Decreases the residence time of DnaA on the chromosome at its binding sites (oriC, replication forks and promoter-binding sites). Tethers DnaA to the replication machinery via the DNA polymerase beta sliding clamp subunit (dnaN). Associates with oriC and other DnaA targets on the chromosome in a DnaA-dependent manner. This chain is Replication initiation control protein YabA, found in Pediococcus pentosaceus (strain ATCC 25745 / CCUG 21536 / LMG 10740 / 183-1w).